The sequence spans 24 residues: Brevinin-1BYa (24 aa).

Cys18 and Cys24 are disulfide-bonded.

As to expression, expressed by the skin glands.

Its subcellular location is the secreted. In terms of biological role, antibacterial activity against Gram-positive bacterium S.aureus and Gram-negative bacterium E.coli. High antifungal activity against C.albicans and a strong hemolytic activity. The protein is Brevinin-1BYa of Rana boylii (Foothill yellow-legged frog).